The sequence spans 332 residues: dTDP-3,4-didehydro-2,6-dideoxy-alpha-D-glucose 3-reductase (332 aa).

Cysteine 12 to arginine 18 is an NADP(+) binding site. Arginine 19 contributes to the substrate binding site. Residues serine 37–arginine 38, tyrosine 58, leucine 74, and histidine 79 each bind NADP(+). Lysine 97 serves as the catalytic Proton donor. NADP(+)-binding residues include arginine 165 and aspartate 177. Substrate is bound by residues tyrosine 235 and threonine 255.

This sequence belongs to the Gfo/Idh/MocA family. In terms of assembly, monomer.

It catalyses the reaction dTDP-4-dehydro-2,6-dideoxy-alpha-D-glucose + NADP(+) = dTDP-3,4-didehydro-2,6-dideoxy-alpha-D-glucose + NADPH + H(+). Functionally, involved in the biosynthesis of forosamine ((4-dimethylamino)-2,3,4,6-tetradeoxy-alpha-D-threo-hexopyranose), a highly deoxygenated sugar component of several bioactive natural products such as the insecticidal spinosyns A and D. Catalyzes the reduction of the C-3 keto moiety of dTDP-3,4-diketo-2,6-dideoxy-alpha-D-glucose to yield dTDP-4-keto-2,6-dideoxy-alpha-D-glucose. NADPH is the better reductant, however NADH can also be used. The protein is dTDP-3,4-didehydro-2,6-dideoxy-alpha-D-glucose 3-reductase of Saccharopolyspora spinosa.